Reading from the N-terminus, the 330-residue chain is AH receptor-interacting protein (330 aa).

The 91-residue stretch at 31–121 (GTKATFHFRT…KDPLEGQRHC (91 aa)) folds into the PPIase FKBP-type domain. Ser43 carries the post-translational modification Phosphoserine. TPR repeat units follow at residues 179 to 212 (VPLIHQEGNRLYREGQVKEAAAKYYDAIACLKNL), 231 to 264 (TPLLLNYCQCKLVAQEYYEVLDHCSSILNKYDDN), and 265 to 298 (VKAYFKRGKAHAAVWNAQEAQADFAKVLELDPAL).

In terms of assembly, interacts with RET in the pituitary gland; this interaction prevents the formation of the AIP-survivin complex.

Its subcellular location is the cytoplasm. Functionally, may play a positive role in AHR-mediated (aromatic hydrocarbon receptor) signaling, possibly by influencing its receptivity for ligand and/or its nuclear targeting. The chain is AH receptor-interacting protein (Aip) from Rattus norvegicus (Rat).